The chain runs to 1806 residues: SH3 and multiple ankyrin repeat domains protein 3 (1806 aa).

The segment at 76–150 (MDGPGASAVV…KFLDEERLLQ (75 aa)) is intramolecular interaction with the ANK repeats. The residue at position 197 (Tyr-197) is a Phosphotyrosine. ANK repeat units lie at residues 223–253 (SGECPLSLAAQLDNATDLLKVLKNGGAHLDF), 257–286 (DGLTAVHCATRQRNAAALTTLLDLGASPDY), 290–320 (RGLTPLYHSALGGGDALCCELLLHDHAQLGI), 324–353 (NGWQEIHQACRFGHVQHLEHLLFYGADMGA), 357–386 (SGNTALHICALYNQESCARVLLFRGANRDV), and 390–420 (NSQTAFQVAIIAGNFELAEVIKTHKDSDVVP). Basic and acidic residues predominate over residues 407-416 (AEVIKTHKDS). Residues 407-467 (AEVIKTHKDS…AQPAASPGPS (61 aa)) are disordered. Residues 439 to 461 (LASPRPLQRSASDINLKGEAQPA) show a composition bias toward pro residues. Phosphoserine is present on residues Ser-448, Ser-450, Ser-463, Ser-470, and Ser-558. Residues 546 to 605 (VPGRKFIAVKAHSPQGEGEIPLHRGEAVKVLSIGEGGFWEGTVKGRTGWFPADCVEEVQM) enclose the SH3 domain. Tyr-631 carries the phosphotyrosine modification. Residues 646–740 (VAVLQKRDHE…RLVMKVVSVT (95 aa)) enclose the PDZ domain. 2 disordered regions span residues 665 to 689 (KAETPIEEFTPTPAFPALQYLESVD) and 760 to 853 (PSTT…KGIP). The tract at residues 753–760 (PPPPKRAP) is required for interaction with ABI1. Residue Ser-770 is modified to Phosphoserine. Positions 813–845 (ATVKQRPTSRRITPAEISSLFERQGLPGPEKLP) are enriched in pro residues. A phosphoserine mark is found at Ser-857, Ser-866, and Ser-877. The interval 871–1021 (RFPRSTSMQD…FSASLFAPSK (151 aa)) is disordered. The span at 906–915 (DSGPPPAFSP) shows a compositional bias: pro residues. Residues Ser-966 and Ser-973 each carry the phosphoserine modification. At Thr-988 the chain carries Phosphothreonine. Residues 993–1013 (PKRRPRPPGPDSPYANLGAFS) show a composition bias toward gly residues. Tyr-1006 is modified (phosphotyrosine). Arg-1041 is subject to Asymmetric dimethylarginine. Over residues 1115–1124 (PGADLPSLQP) the composition is skewed to low complexity. 3 disordered regions span residues 1115-1460 (PGAD…MSTL), 1475-1525 (ADGH…HHAA), and 1546-1584 (SKLWGDPVESRGLPGPEDDKPTVISELSSRLQQLNKDTR). The segment covering 1173–1193 (TGKPLDPSSPLALALAARERA) has biased composition (basic and acidic residues). Thr-1204 bears the Phosphothreonine mark. Residues Ser-1208, Ser-1233, Ser-1237, and Ser-1240 each carry the phosphoserine modification. The span at 1251–1261 (EAEKVPREERK) shows a compositional bias: pro residues. Thr-1309 is modified (phosphothreonine). Residue Ser-1328 is modified to Phosphoserine. Over residues 1360–1370 (LPPAQLSSSDE) the composition is skewed to basic and acidic residues. Low complexity-rich tracts occupy residues 1371 to 1392 (ETREELARIGLVPPPEEFANGV) and 1444 to 1460 (HLETTSTISTVSSMSTL). The SH3-binding motif lies at 1485 to 1491 (PPVPPKP). Ser-1495 carries the phosphoserine modification. Over residues 1495–1505 (SPLGKGPVTFR) the composition is skewed to polar residues. The stretch at 1569 to 1589 (ISELSSRLQQLNKDTRSLGEE) forms a coiled coil. 4 positions are modified to phosphoserine: Ser-1585, Ser-1596, Ser-1604, and Ser-1614. Over residues 1627–1637 (PGGPGGGASYS) the composition is skewed to low complexity. The segment at 1627–1664 (PGGPGGGASYSVRPSGRYPVARRAPSPVKPASLERVEG) is disordered. Residues 1638–1657 (VRPSGRYPVARRAPSPVKPA) show a composition bias toward pro residues. Phosphoserine occurs at positions 1709, 1711, and 1713. The SAM domain occupies 1743-1806 (WSKFDVGDWL…ERALRQLDGS (64 aa)).

In terms of assembly, may homomultimerize via its SAM domain. Interacts with BAIAP2, DBNL and SLC17A7/VGLUT1. Interacts with DLGAP1/GKAP, GRM1/MGLUR1, GRM5/MGLUR5 and LZTS3 C-termini via its PDZ domain. Interacts with ABI1, HOMER1, HOMER2, HOMER3 and CTTN/cortactin SH3 domain. Is part of a complex with DLG4/PSD-95 and DLGAP1/GKAP. Interacts (via PDZ domain) with the GRIA1 subunit of the AMPA receptor (via PDZ-binding motif). Interacts with WASF1 and CYFIP2; the interactions mediate the association of SHANK3 with the WAVE1 complex. Interacts with ARPC2; the interaction probably mediates the association of SHANK3 with the Arp2/3 complex. Interacts (via ANK repeats) with SHARPIN and SPTAN1. Interacts (via PDZ domain) with ARHGAP44 (probably via PDZ-binding motif); the interaction takes place in dendritic spines and promotes GRIA1 exocytosis. Interacts with CAMK2A. Interacts with DIP2A. Interacts with ADGRL3. Expressed in the cerebral cortex and the cerebellum.

The protein resides in the cytoplasm. It localises to the postsynaptic density. The protein localises to the cell projection. It is found in the dendritic spine. Its function is as follows. Major scaffold postsynaptic density protein which interacts with multiple proteins and complexes to orchestrate the dendritic spine and synapse formation, maturation and maintenance. Interconnects receptors of the postsynaptic membrane including NMDA-type and metabotropic glutamate receptors via complexes with GKAP/PSD-95 and HOMER, respectively, and the actin-based cytoskeleton. Plays a role in the structural and functional organization of the dendritic spine and synaptic junction through the interaction with Arp2/3 and WAVE1 complex as well as the promotion of the F-actin clusters. By way of this control of actin dynamics, participates in the regulation of developing neurons growth cone motility and the NMDA receptor-signaling. Also modulates GRIA1 exocytosis and GRM5/MGLUR5 expression and signaling to control the AMPA and metabotropic glutamate receptor-mediated synaptic transmission and plasticity. May be required at an early stage of synapse formation and be inhibited by IGF1 to promote synapse maturation. The protein is SH3 and multiple ankyrin repeat domains protein 3 (SHANK3) of Homo sapiens (Human).